The chain runs to 458 residues: Aldehyde dehydrogenase (458 aa).

NADP(+) is bound by residues 134–135 (WN), 158–161 (KHAS), and 210–211 (GS). The Proton acceptor role is filled by glutamate 232. An NADP(+)-binding site is contributed by leucine 233. Cysteine 266 (nucleophile) is an active-site residue. Glutamate 363 contacts NADP(+).

Belongs to the aldehyde dehydrogenase family. Monomer.

It catalyses the reaction an aldehyde + NAD(+) + H2O = a carboxylate + NADH + 2 H(+). It carries out the reaction an aldehyde + NADP(+) + H2O = a carboxylate + NADPH + 2 H(+). It functions in the pathway carbohydrate metabolism; D-xylose degradation. Aldehyde dehydrogenase able to oxidize various aldehydes such as formaldehyde, glyceraldehyde, butyraldehyde, glutaraldehyde and benzaldehyde (in vitro). Is likely involved in the oxidative D-xylose degradation pathway, catalyzing the oxidation step of 2-oxoglutarate semialdehyde to 2-oxoglutarate. Is able to use both NAD(+) and NADP(+); however, shows a preference for NADP(+). Does not display succinate semialdehyde dehydrogenase activity. This is Aldehyde dehydrogenase (aldh) from Paenarthrobacter nicotinovorans (Arthrobacter nicotinovorans).